Here is a 95-residue protein sequence, read N- to C-terminus: Large ribosomal subunit protein bL27 (95 aa).

The propeptide occupies methionine 1–phenylalanine 6.

It belongs to the bacterial ribosomal protein bL27 family. Post-translationally, the N-terminus is cleaved by ribosomal processing cysteine protease Prp.

This chain is Large ribosomal subunit protein bL27, found in Caldanaerobacter subterraneus subsp. tengcongensis (strain DSM 15242 / JCM 11007 / NBRC 100824 / MB4) (Thermoanaerobacter tengcongensis).